The chain runs to 411 residues: uncharacterized protein (411 aa).

Residues 32–108 form a disordered region; that stretch reads LGGDPAPKPT…PEHPRRIPIP (77 aa).

This is an uncharacterized protein from Ictalurid herpesvirus 1 (strain Auburn) (IcHV-1).